The sequence spans 763 residues: Glycerophosphodiester phosphodiesterase GDPDL1 (763 aa).

The signal sequence occupies residues 1–35 (MNSRPSNPTKLVIRSSTLLFCGVVLIHLFAAQIDA). Over 36-744 (QRSTSRWQTL…STIAQAPSGQ (709 aa)) the chain is Extracellular. One can recognise a GP-PDE 1 domain in the interval 50 to 350 (PLVIARGGFS…DFPITASAAV (301 aa)). Residues Asn105, Asn192, Asn248, Asn257, Asn315, Asn359, Asn430, Asn534, Asn547, and Asn654 are each glycosylated (N-linked (GlcNAc...) asparagine). One can recognise a GP-PDE 2 domain in the interval 366 to 668 (FLVISKDGAS…EFPFTAARYK (303 aa)). A helical membrane pass occupies residues 745–762 (TRLKLSLLLSVFFLSLLL). Leu763 is a topological domain (cytoplasmic).

Belongs to the glycerophosphoryl diester phosphodiesterase family. Ca(2+) is required as a cofactor. As to expression, expressed in rosette and cauline leaves, stems, flowers and siliques.

It is found in the cell membrane. It catalyses the reaction a sn-glycero-3-phosphodiester + H2O = an alcohol + sn-glycerol 3-phosphate + H(+). Hydrolyzes glycerolphosphoglycerol, glycerophosphocholine and glycerophosphoethanolamine in vitro. This Arabidopsis thaliana (Mouse-ear cress) protein is Glycerophosphodiester phosphodiesterase GDPDL1.